The sequence spans 334 residues: MSKNNYYPYPPTLGKVFLFKRGPEIVSMESSETIQPADKLESILNSTSTITAELLFNTFDIPGISSKTDKLKLLFQKAFEQGINPNIQDSSGNTLLLYACQSSLVEVVQFLLKKGANPNISNNSDNTPLSKIISNRFIDKTEIYIAKLLLQNGALTELKDFVGFTPIQSATQYGHTEIVKSLIQNGADINVIASIETNSYYSGKSLVESVPSNKPELKALLTLTKACKDNNFSIVDNTITAKDIVEFIDWQLSITPENSRFFDKHLSELDNLKNFLETKELVSNETIQKINEHITSYSTTEISSPDVTPSFINEAEHQEYNLAGETDKSAPETA.

ANK repeat units follow at residues 80 to 90, 91 to 120, 124 to 161, and 162 to 191; these read EQGINPNIQDS, SGNT…NPNI, SDNT…LKDF, and VGFT…DINV.

The protein is Putative ankyrin repeat protein RBE_0347 of Rickettsia bellii (strain RML369-C).